The sequence spans 220 residues: MGRRPARCYRQIKNKPYPKSRFCRGVPDPKIRIYDVGMKKKGVDEFPFCVHLVSWEKENVSSEALEAARIACNKYMTKFAGKDAFHLRVRVHPFHVLRINKMLSCAGADRLQTGMRGAFGKPQGVCARVAIGQVLLSVRCKDNNSHNAQEALRRAKFKFPGRQKIIVSRKWGFTKINRADYPRLKSENRILPDGVNAKLLGCHGRLANRKPGRAFIDAVA.

The protein belongs to the universal ribosomal protein uL16 family. In terms of assembly, component of the small ribosomal subunit. Mature ribosomes consist of a small (40S) and a large (60S) subunit. The 40S subunit contains about 33 different proteins and 1 molecule of RNA (18S). The 60S subunit contains about 49 different proteins and 3 molecules of RNA (25S, 5.8S and 5S).

The polypeptide is Large ribosomal subunit protein uL16 (RPL10) (Euphorbia esula (Leafy spurge)).